Consider the following 159-residue polypeptide: Putative 4-hydroxy-4-methyl-2-oxoglutarate aldolase (159 aa).

Residues 74–77 and Arg-96 contribute to the substrate site; that span reads GDNL. A divalent metal cation is bound at residue Asp-97.

This sequence belongs to the class II aldolase/RraA-like family. As to quaternary structure, homotrimer. It depends on a divalent metal cation as a cofactor.

It catalyses the reaction 4-hydroxy-4-methyl-2-oxoglutarate = 2 pyruvate. The enzyme catalyses oxaloacetate + H(+) = pyruvate + CO2. In terms of biological role, catalyzes the aldol cleavage of 4-hydroxy-4-methyl-2-oxoglutarate (HMG) into 2 molecules of pyruvate. Also contains a secondary oxaloacetate (OAA) decarboxylase activity due to the common pyruvate enolate transition state formed following C-C bond cleavage in the retro-aldol and decarboxylation reactions. This Bacillus anthracis protein is Putative 4-hydroxy-4-methyl-2-oxoglutarate aldolase.